The primary structure comprises 458 residues: Kelch repeat and BTB domain-containing protein 13 (458 aa).

In terms of domain architecture, BTB spans 7–74 (VPVQVWVDGQ…LRGERPALAA (68 aa)). Kelch repeat units follow at residues 159 to 209 (AVST…TLGN), 210 to 258 (KLYI…GFEG), 259 to 305 (RLYA…QARG), 307 to 350 (LFVC…VAHR), and 352 to 400 (SLYV…VVRG).

Component of the BCR(KBTBD13) E3 ubiquitin ligase complex, at least composed of CUL3 and KBTBD13 and RBX1. Interacts with CUL3. In terms of processing, autoubiquitinated. As to expression, expressed in skeletal muscle, heart and lung.

It is found in the cytoplasm. It functions in the pathway protein modification; protein ubiquitination. Functionally, substrate-specific adapter of a BCR (BTB-CUL3-RBX1) E3 ubiquitin ligase complex. This is Kelch repeat and BTB domain-containing protein 13 (Kbtbd13) from Mus musculus (Mouse).